A 59-amino-acid chain; its full sequence is Large ribosomal subunit protein bL35 (59 aa).

Disordered stretches follow at residues 1–22 (MKVK…IKRK) and 30–49 (APHK…TVSA). The segment covering 30–43 (APHKTTKQKRHLRK) has biased composition (basic residues).

Belongs to the bacterial ribosomal protein bL35 family.

This Mycoplasma pneumoniae (strain ATCC 29342 / M129 / Subtype 1) (Mycoplasmoides pneumoniae) protein is Large ribosomal subunit protein bL35 (rpmI).